The sequence spans 142 residues: Large ribosomal subunit protein uL11 (142 aa).

Belongs to the universal ribosomal protein uL11 family. In terms of assembly, part of the ribosomal stalk of the 50S ribosomal subunit. Interacts with L10 and the large rRNA to form the base of the stalk. L10 forms an elongated spine to which L12 dimers bind in a sequential fashion forming a multimeric L10(L12)X complex. In terms of processing, one or more lysine residues are methylated.

In terms of biological role, forms part of the ribosomal stalk which helps the ribosome interact with GTP-bound translation factors. The sequence is that of Large ribosomal subunit protein uL11 from Beijerinckia indica subsp. indica (strain ATCC 9039 / DSM 1715 / NCIMB 8712).